A 129-amino-acid polypeptide reads, in one-letter code: Small ribosomal subunit protein uS11 (129 aa).

It belongs to the universal ribosomal protein uS11 family. As to quaternary structure, part of the 30S ribosomal subunit. Interacts with proteins S7 and S18. Binds to IF-3.

In terms of biological role, located on the platform of the 30S subunit, it bridges several disparate RNA helices of the 16S rRNA. Forms part of the Shine-Dalgarno cleft in the 70S ribosome. The protein is Small ribosomal subunit protein uS11 of Sodalis glossinidius (strain morsitans).